Consider the following 268-residue polypeptide: Cell division coordinator CpoB (268 aa).

Positions 1-21 (MRMCRRVVTVLALSLPLAAWA) are cleaved as a signal peptide. Residues 58-94 (QLFMQLQQMQDQLSRQQGIIEELQNDVSRMKQENLER) adopt a coiled-coil conformation. Positions 104–146 (SGAAPAATPDNSSGGGASNAAPDAAAGAAAQQPAGSSQPGDPA) are disordered. Low complexity predominate over residues 121 to 143 (SNAAPDAAAGAAAQQPAGSSQPG). TPR repeat units lie at residues 149–181 (KLYY…YPNS), 185–218 (GNAQ…YPKH), and 222–255 (PDSL…YPGT).

This sequence belongs to the CpoB family.

The protein localises to the periplasm. Its function is as follows. Mediates coordination of peptidoglycan synthesis and outer membrane constriction during cell division. The chain is Cell division coordinator CpoB from Pseudomonas putida (strain ATCC 47054 / DSM 6125 / CFBP 8728 / NCIMB 11950 / KT2440).